Reading from the N-terminus, the 354-residue chain is Cyclin-D1-2 (354 aa).

2 disordered regions span residues 37 to 74 (FFQQ…EEEE) and 331 to 354 (TTAT…RRKM). Low complexity-rich tracts occupy residues 44–66 (PAPA…AGSC) and 331–346 (TTAT…VSSS).

Belongs to the cyclin family. Cyclin D subfamily.

The polypeptide is Cyclin-D1-2 (CYCD1-2) (Oryza sativa subsp. japonica (Rice)).